Reading from the N-terminus, the 1134-residue chain is Isoleucine--tRNA ligase (1134 aa).

Positions 52–62 match the 'HIGH' region motif; the sequence is PFANGLPHYGH. The short motif at 656-660 is the 'KMSKS' region element; that stretch reads KLSKR. Residue Lys-659 participates in ATP binding.

This sequence belongs to the class-I aminoacyl-tRNA synthetase family. IleS type 2 subfamily. In terms of assembly, monomer. Zn(2+) serves as cofactor.

The protein localises to the cytoplasm. It catalyses the reaction tRNA(Ile) + L-isoleucine + ATP = L-isoleucyl-tRNA(Ile) + AMP + diphosphate. Functionally, catalyzes the attachment of isoleucine to tRNA(Ile). As IleRS can inadvertently accommodate and process structurally similar amino acids such as valine, to avoid such errors it has two additional distinct tRNA(Ile)-dependent editing activities. One activity is designated as 'pretransfer' editing and involves the hydrolysis of activated Val-AMP. The other activity is designated 'posttransfer' editing and involves deacylation of mischarged Val-tRNA(Ile). The chain is Isoleucine--tRNA ligase from Wolbachia sp. subsp. Brugia malayi (strain TRS).